A 557-amino-acid chain; its full sequence is Anti-Muellerian hormone type-2 receptor (557 aa).

A signal peptide spans 1-17 (MLGTLGLWTLLPAAAQV). Residues 18–144 (SPNRRTCVFF…QEPQATPGGP (127 aa)) are Extracellular-facing. Cystine bridges form between C55–C79 and C92–C109. N66 carries an N-linked (GlcNAc...) asparagine glycan. N-linked (GlcNAc...) asparagine glycosylation is present at N119. A helical transmembrane segment spans residues 145-165 (IWMAQLLLGVFLVLLLSIIIL). The Cytoplasmic segment spans residues 166–557 (ALLQRKACRV…SVQQGSGSKS (392 aa)). In terms of domain architecture, Protein kinase spans 201-511 (LRFSQVIQEG…RLAALAYPQV (311 aa)). ATP-binding positions include 207-215 (IQEGGHAVV) and K228. Residue D331 is the Proton acceptor of the active site.

The protein belongs to the protein kinase superfamily. TKL Ser/Thr protein kinase family. TGFB receptor subfamily. Interacts with type I receptor ACVR1. Mg(2+) is required as a cofactor. Mn(2+) serves as cofactor.

The protein localises to the membrane. The catalysed reaction is L-threonyl-[receptor-protein] + ATP = O-phospho-L-threonyl-[receptor-protein] + ADP + H(+). It catalyses the reaction L-seryl-[receptor-protein] + ATP = O-phospho-L-seryl-[receptor-protein] + ADP + H(+). Functionally, on ligand binding, forms a receptor complex consisting of two type II and two type I transmembrane serine/threonine kinases. Type II receptors phosphorylate and activate type I receptors which autophosphorylate, then bind and activate SMAD transcriptional regulators. Receptor for anti-Muellerian hormone. In Rattus norvegicus (Rat), this protein is Anti-Muellerian hormone type-2 receptor (Amhr2).